The following is a 336-amino-acid chain: D-altritol 5-dehydrogenase (336 aa).

Zn(2+) contacts are provided by Cys37, His59, Glu60, Cys89, Cys92, Cys95, and Cys103.

This sequence belongs to the zinc-containing alcohol dehydrogenase family. Requires Zn(2+) as cofactor.

It carries out the reaction D-altritol + NAD(+) = keto-D-tagatose + NADH + H(+). The protein operates within carbohydrate metabolism. Involved in D-altritol catabolism. Catalyzes the oxidation of D-altritol to D-tagatose. The chain is D-altritol 5-dehydrogenase from Agrobacterium fabrum (strain C58 / ATCC 33970) (Agrobacterium tumefaciens (strain C58)).